Reading from the N-terminus, the 337-residue chain is GTPase Obg (337 aa).

The Obg domain occupies 1 to 158; that stretch reads MFIDEVRILV…KRLRLELKLL (158 aa). Basic and acidic residues-rich tracts occupy residues 61–74 and 137–146; these read NPEH…HGEG and PTEHEPGRPG. 2 disordered regions span residues 61 to 83 and 119 to 146; these read NPEH…AEGR and GGRG…GRPG. Positions 159–330 constitute an OBG-type G domain; sequence ADVGLVGFPN…LKHAMADRVL (172 aa). Residues 165 to 172, 190 to 194, 212 to 215, 282 to 285, and 311 to 313 contribute to the GTP site; these read GFPNAGKS, FTTLE, DIPG, TKMD, and SSA. The Mg(2+) site is built by S172 and T192.

The protein belongs to the TRAFAC class OBG-HflX-like GTPase superfamily. OBG GTPase family. As to quaternary structure, monomer. Requires Mg(2+) as cofactor.

It is found in the cytoplasm. Its function is as follows. An essential GTPase which binds GTP, GDP and possibly (p)ppGpp with moderate affinity, with high nucleotide exchange rates and a fairly low GTP hydrolysis rate. Plays a role in control of the cell cycle, stress response, ribosome biogenesis and in those bacteria that undergo differentiation, in morphogenesis control. In Solibacter usitatus (strain Ellin6076), this protein is GTPase Obg.